Consider the following 255-residue polypeptide: Zinc import ATP-binding protein ZnuC (255 aa).

Positions 5-220 (VALEHIAVAF…PDFIAMFGYR (216 aa)) constitute an ABC transporter domain.

The protein belongs to the ABC transporter superfamily. Zinc importer (TC 3.A.1.15.5) family. As to quaternary structure, the complex is composed of two ATP-binding proteins (ZnuC), two transmembrane proteins (ZnuB) and a solute-binding protein (ZnuA).

The protein resides in the cell inner membrane. It carries out the reaction Zn(2+)(out) + ATP(in) + H2O(in) = Zn(2+)(in) + ADP(in) + phosphate(in) + H(+)(in). Part of the ABC transporter complex ZnuABC involved in zinc import. Responsible for energy coupling to the transport system. The chain is Zinc import ATP-binding protein ZnuC from Sodalis glossinidius (strain morsitans).